The following is a 240-amino-acid chain: Ribonuclease PH (240 aa).

Phosphate-binding positions include Arg-86 and Gly-124 to Arg-126.

This sequence belongs to the RNase PH family. In terms of assembly, homohexameric ring arranged as a trimer of dimers.

It catalyses the reaction tRNA(n+1) + phosphate = tRNA(n) + a ribonucleoside 5'-diphosphate. In terms of biological role, phosphorolytic 3'-5' exoribonuclease that plays an important role in tRNA 3'-end maturation. Removes nucleotide residues following the 3'-CCA terminus of tRNAs; can also add nucleotides to the ends of RNA molecules by using nucleoside diphosphates as substrates, but this may not be physiologically important. Probably plays a role in initiation of 16S rRNA degradation (leading to ribosome degradation) during starvation. The protein is Ribonuclease PH of Rhodospirillum rubrum (strain ATCC 11170 / ATH 1.1.1 / DSM 467 / LMG 4362 / NCIMB 8255 / S1).